Reading from the N-terminus, the 142-residue chain is Hemoglobin subunit alpha (142 aa).

Residue Ser1 is modified to N-acetylserine. Residues 1–142 (SLSDKDKADV…LALALGQKYR (142 aa)) form the Globin domain. O2 is bound at residue His58. Residue His88 participates in heme b binding.

This sequence belongs to the globin family. Heterotetramer of two alpha chains and two beta chains. In terms of tissue distribution, red blood cells.

Functionally, involved in oxygen transport from gills to the various peripheral tissues. The polypeptide is Hemoglobin subunit alpha (hba) (Catostomus clarkii (Desert sucker)).